The sequence spans 92 residues: Small ribosomal subunit protein bS20 (92 aa).

The tract at residues 1–25 (MANSAQARKRARQAAKANSHNSALR) is disordered.

The protein belongs to the bacterial ribosomal protein bS20 family.

Binds directly to 16S ribosomal RNA. The chain is Small ribosomal subunit protein bS20 from Paraburkholderia phymatum (strain DSM 17167 / CIP 108236 / LMG 21445 / STM815) (Burkholderia phymatum).